The following is a 359-amino-acid chain: CDP-glucose 4,6-dehydratase (359 aa).

The protein belongs to the NAD(P)-dependent epimerase/dehydratase family. NAD(+) is required as a cofactor.

The enzyme catalyses CDP-D-glucose = CDP-4-dehydro-6-deoxy-D-glucose + H2O. Its pathway is nucleotide-sugar biosynthesis; CDP-3,6-dideoxy-D-mannose biosynthesis; CDP-3,6-dideoxy-D-mannose from CTP and alpha-D-glucose 1-phosphate: step 2/5. It participates in bacterial outer membrane biogenesis; LPS O-antigen biosynthesis. This Salmonella typhimurium (strain LT2 / SGSC1412 / ATCC 700720) protein is CDP-glucose 4,6-dehydratase (rfbG).